The chain runs to 117 residues: MYIYVEVCTHVHAQATDATRPGIHICTYIYAHIYIYIYVYVNVYIQLVISRAEWAEKHSIVEKKREEKGRGAIAMDVVEYREGQAVVQWMRFEAQRKGGASKHRTLSAETGIRGEGE.

A disordered region spans residues 96 to 117; that stretch reads RKGGASKHRTLSAETGIRGEGE.

This is an uncharacterized protein from Saccharomyces cerevisiae (strain ATCC 204508 / S288c) (Baker's yeast).